We begin with the raw amino-acid sequence, 902 residues long: Protein translocase subunit SecA (902 aa).

Residues glutamine 87, 105-109 (GEGKT), and aspartate 512 each bind ATP. Residues 850 to 902 (RLAKQQQLSHEVTKESQMSAVDGQVASGKKVGRNEPCPCGSGKKYKHCHGKLG) are disordered. Residues 853–868 (KQQQLSHEVTKESQMS) show a composition bias toward polar residues. The Zn(2+) site is built by cysteine 886, cysteine 888, cysteine 897, and histidine 898. Residues 892-902 (KKYKHCHGKLG) are compositionally biased toward basic residues.

It belongs to the SecA family. As to quaternary structure, monomer and homodimer. Part of the essential Sec protein translocation apparatus which comprises SecA, SecYEG and auxiliary proteins SecDF-YajC and YidC. The cofactor is Zn(2+).

Its subcellular location is the cell inner membrane. The protein localises to the cytoplasm. The enzyme catalyses ATP + H2O + cellular proteinSide 1 = ADP + phosphate + cellular proteinSide 2.. Functionally, part of the Sec protein translocase complex. Interacts with the SecYEG preprotein conducting channel. Has a central role in coupling the hydrolysis of ATP to the transfer of proteins into and across the cell membrane, serving both as a receptor for the preprotein-SecB complex and as an ATP-driven molecular motor driving the stepwise translocation of polypeptide chains across the membrane. In Proteus mirabilis (strain HI4320), this protein is Protein translocase subunit SecA.